The chain runs to 309 residues: Homoserine O-succinyltransferase (309 aa).

Cys142 acts as the Acyl-thioester intermediate in catalysis. Substrate is bound by residues Lys163 and Ser192. His235 functions as the Proton acceptor in the catalytic mechanism. Glu237 is an active-site residue. Arg249 serves as a coordination point for substrate.

It belongs to the MetA family.

Its subcellular location is the cytoplasm. The enzyme catalyses L-homoserine + succinyl-CoA = O-succinyl-L-homoserine + CoA. Its pathway is amino-acid biosynthesis; L-methionine biosynthesis via de novo pathway; O-succinyl-L-homoserine from L-homoserine: step 1/1. Transfers a succinyl group from succinyl-CoA to L-homoserine, forming succinyl-L-homoserine. The protein is Homoserine O-succinyltransferase of Yersinia enterocolitica serotype O:8 / biotype 1B (strain NCTC 13174 / 8081).